The primary structure comprises 214 residues: Ribonuclease HII (214 aa).

Residues 26–214 (EIVCGVDEAG…PVREAFDLIR (189 aa)) enclose the RNase H type-2 domain. D32, E33, and D124 together coordinate a divalent metal cation.

This sequence belongs to the RNase HII family. It depends on Mn(2+) as a cofactor. The cofactor is Mg(2+).

Its subcellular location is the cytoplasm. It catalyses the reaction Endonucleolytic cleavage to 5'-phosphomonoester.. Endonuclease that specifically degrades the RNA of RNA-DNA hybrids. The chain is Ribonuclease HII from Burkholderia pseudomallei (strain 1710b).